The primary structure comprises 250 residues: 3-deoxy-manno-octulosonate cytidylyltransferase (250 aa).

It belongs to the KdsB family.

The protein resides in the cytoplasm. The enzyme catalyses 3-deoxy-alpha-D-manno-oct-2-ulosonate + CTP = CMP-3-deoxy-beta-D-manno-octulosonate + diphosphate. It participates in nucleotide-sugar biosynthesis; CMP-3-deoxy-D-manno-octulosonate biosynthesis; CMP-3-deoxy-D-manno-octulosonate from 3-deoxy-D-manno-octulosonate and CTP: step 1/1. It functions in the pathway bacterial outer membrane biogenesis; lipopolysaccharide biosynthesis. Its function is as follows. Activates KDO (a required 8-carbon sugar) for incorporation into bacterial lipopolysaccharide in Gram-negative bacteria. This chain is 3-deoxy-manno-octulosonate cytidylyltransferase, found in Pectobacterium carotovorum subsp. carotovorum (strain PC1).